A 67-amino-acid chain; its full sequence is Large ribosomal subunit protein bL32c (67 aa).

It belongs to the bacterial ribosomal protein bL32 family.

The protein resides in the plastid. The protein localises to the chloroplast. This chain is Large ribosomal subunit protein bL32c, found in Chara vulgaris (Common stonewort).